We begin with the raw amino-acid sequence, 429 residues long: Glutamate-1-semialdehyde 2,1-aminomutase (429 aa).

Lysine 267 bears the N6-(pyridoxal phosphate)lysine mark.

Belongs to the class-III pyridoxal-phosphate-dependent aminotransferase family. HemL subfamily. In terms of assembly, homodimer. Requires pyridoxal 5'-phosphate as cofactor.

Its subcellular location is the cytoplasm. It carries out the reaction (S)-4-amino-5-oxopentanoate = 5-aminolevulinate. The protein operates within porphyrin-containing compound metabolism; protoporphyrin-IX biosynthesis; 5-aminolevulinate from L-glutamyl-tRNA(Glu): step 2/2. This Xanthomonas oryzae pv. oryzae (strain PXO99A) protein is Glutamate-1-semialdehyde 2,1-aminomutase.